The sequence spans 142 residues: Hemoglobin subunit alpha-C (142 aa).

At alanine 2 the chain carries N-acetylalanine. The Globin domain maps to 2-142 (ALNCDDKAHI…VSGLLTSKYR (141 aa)). Position 59 (histidine 59) interacts with O2. Residue histidine 88 participates in heme b binding.

This sequence belongs to the globin family. Heterotetramer of either two alpha-B chains or two alpha-C chains and two beta chains. The two major hemoglobins, B and C, associate upon deoxygenation to form a trimer of tetramers, BC2, that has a much lower affinity for oxygen than either component alone. Red blood cells.

In terms of biological role, the alpha-C chain is a component of adult hemoglobin C. This chain is Hemoglobin subunit alpha-C, found in Aquarana catesbeiana (American bullfrog).